A 622-amino-acid polypeptide reads, in one-letter code: Low affinity potassium transport system protein Kup (622 aa).

12 helical membrane passes run 9–29 (LSAV…TSPL), 46–66 (PDVV…VVSV), 101–121 (ILVV…VITP), 137–157 (PALD…LFVI), 165–185 (VGKL…LLGL), 213–233 (VSFF…ALYA), 247–267 (WFTV…ALLL), 276–296 (PFFL…ATLA), 337–357 (IYIP…IIGF), 363–383 (LAAA…ILFC), 395–415 (FLVA…FSAN), and 416–436 (VLKL…MFII).

It belongs to the HAK/KUP transporter (TC 2.A.72) family.

Its subcellular location is the cell inner membrane. The catalysed reaction is K(+)(in) + H(+)(in) = K(+)(out) + H(+)(out). Functionally, responsible for the low-affinity transport of potassium into the cell. Likely operates as a K(+):H(+) symporter. This chain is Low affinity potassium transport system protein Kup, found in Yersinia pseudotuberculosis serotype O:1b (strain IP 31758).